Here is a 100-residue protein sequence, read N- to C-terminus: Osteocalcin (100 aa).

The first 23 residues, 1 to 23 (MRALTLLALLALAALCITGQAGA), serve as a signal peptide directing secretion. The propeptide occupies 24 to 51 (KPSGADSSKGAAFVSKQEGSEVVKRPRR). The Gla domain occupies 52-98 (YLYQWLGAPVPYPDPLEPKREVCELNPDCDELADHIGFQEAYRRFYG). Positions 68, 72, 75, and 81 each coordinate Ca(2+). A 4-carboxyglutamate mark is found at Glu68, Glu72, and Glu75. A disulfide bridge links Cys74 with Cys80.

The protein belongs to the osteocalcin/matrix Gla protein family. In terms of processing, gamma-carboxyglutamate residues are formed by vitamin K dependent carboxylation by GGCX. These residues are essential for the binding of calcium. Decarboxylation promotes the hormone activity.

The protein resides in the secreted. Its function is as follows. The carboxylated form is one of the main organic components of the bone matrix, which constitutes 1-2% of the total bone protein: it acts as a negative regulator of bone formation and is required to limit bone formation without impairing bone resorption or mineralization. The carboxylated form binds strongly to apatite and calcium. The uncarboxylated form acts as a hormone secreted by osteoblasts, which regulates different cellular processes, such as energy metabolism, male fertility and brain development. Regulates of energy metabolism by acting as a hormone favoring pancreatic beta-cell proliferation, insulin secretion and sensitivity and energy expenditure. Uncarboxylated osteocalcin hormone also promotes testosterone production in the testes: acts as a ligand for G protein-coupled receptor GPRC6A at the surface of Leydig cells, initiating a signaling response that promotes the expression of enzymes required for testosterone synthesis in a CREB-dependent manner. Also acts as a regulator of brain development: osteocalcin hormone crosses the blood-brain barrier and acts as a ligand for GPR158 on neurons, initiating a signaling response that prevents neuronal apoptosis in the hippocampus, favors the synthesis of all monoamine neurotransmitters and inhibits that of gamma-aminobutyric acid (GABA). Osteocalcin also crosses the placenta during pregnancy and maternal osteocalcin is required for fetal brain development. This is Osteocalcin from Pongo pygmaeus (Bornean orangutan).